The following is a 212-amino-acid chain: Ribosomal RNA large subunit methyltransferase E (212 aa).

S-adenosyl-L-methionine contacts are provided by Gly57, Trp59, Asp77, Asp93, and Asp122. Lys162 functions as the Proton acceptor in the catalytic mechanism.

It belongs to the class I-like SAM-binding methyltransferase superfamily. RNA methyltransferase RlmE family.

It is found in the cytoplasm. It catalyses the reaction uridine(2552) in 23S rRNA + S-adenosyl-L-methionine = 2'-O-methyluridine(2552) in 23S rRNA + S-adenosyl-L-homocysteine + H(+). In terms of biological role, specifically methylates the uridine in position 2552 of 23S rRNA at the 2'-O position of the ribose in the fully assembled 50S ribosomal subunit. This Coxiella burnetii (strain RSA 493 / Nine Mile phase I) protein is Ribosomal RNA large subunit methyltransferase E.